Reading from the N-terminus, the 91-residue chain is Small ribosomal subunit protein uS19 (91 aa).

Belongs to the universal ribosomal protein uS19 family.

In terms of biological role, protein S19 forms a complex with S13 that binds strongly to the 16S ribosomal RNA. The chain is Small ribosomal subunit protein uS19 from Shouchella clausii (strain KSM-K16) (Alkalihalobacillus clausii).